The sequence spans 405 residues: Probable succinyl-diaminopimelate desuccinylase (405 aa).

H72 serves as a coordination point for Zn(2+). The active site involves D74. D105 is a binding site for Zn(2+). The active-site Proton acceptor is the E139. E140, E165, and H377 together coordinate Zn(2+).

It belongs to the peptidase M20A family. Zn(2+) is required as a cofactor. Requires Co(2+) as cofactor.

It catalyses the reaction N-succinyl-(2S,6S)-2,6-diaminopimelate + H2O = (2S,6S)-2,6-diaminopimelate + succinate. The protein operates within amino-acid biosynthesis; L-lysine biosynthesis via DAP pathway; LL-2,6-diaminopimelate from (S)-tetrahydrodipicolinate (succinylase route): step 3/3. In Staphylococcus epidermidis (strain ATCC 35984 / DSM 28319 / BCRC 17069 / CCUG 31568 / BM 3577 / RP62A), this protein is Probable succinyl-diaminopimelate desuccinylase (dapE).